The chain runs to 470 residues: DNA primase large subunit (470 aa).

Residues Cys279, Cys358, Cys376, and Cys414 each contribute to the [4Fe-4S] cluster site. The segment at 449 to 470 (EEKKSAKQSNNKENENQSIDEK) is disordered.

It belongs to the eukaryotic-type primase large subunit family. As to quaternary structure, heterodimer of a small subunit and a large subunit. It depends on [4Fe-4S] cluster as a cofactor.

DNA primase is the polymerase that synthesizes small RNA primers for the Okazaki fragments made during discontinuous DNA replication. This Dictyostelium discoideum (Social amoeba) protein is DNA primase large subunit (prim2).